We begin with the raw amino-acid sequence, 225 residues long: Ribonuclease 3 (225 aa).

An RNase III domain is found at Leu5–Asp127. Glu40 serves as a coordination point for Mg(2+). Residue Asp44 is part of the active site. 2 residues coordinate Mg(2+): Asp113 and Glu116. Residue Glu116 is part of the active site. Residues Asp154–Met224 form the DRBM domain.

This sequence belongs to the ribonuclease III family. As to quaternary structure, homodimer. It depends on Mg(2+) as a cofactor.

The protein localises to the cytoplasm. It catalyses the reaction Endonucleolytic cleavage to 5'-phosphomonoester.. Functionally, digests double-stranded RNA. Involved in the processing of primary rRNA transcript to yield the immediate precursors to the large and small rRNAs (23S and 16S). Also processes some mRNAs, and tRNAs when they are encoded in the rRNA operon. CRISPR (clustered regularly interspaced short palindromic repeat) is an adaptive immune system that provides protection against mobile genetic elements (viruses, transposable elements and conjugative plasmids). CRISPR clusters contain spacers, sequences complementary to antecedent mobile elements, and target invading nucleic acids. CRISPR clusters are transcribed and processed into CRISPR RNA (crRNA). In this organism endogenous ribonuclease 3 and Cas9 are required for correct coprocessing of pre-crRNA and the trans-encoded small RNA (tracrRNA). Cas9, crRNA and tracrRNA are required for cleavage of invading DNA. Complements pre-crRNA and tracrRNA coprocessing defects in an rnc deletion in S.pyogenes strain 370. This is Ribonuclease 3 from Pasteurella multocida (strain Pm70).